Reading from the N-terminus, the 285-residue chain is Aspartate/glutamate leucyltransferase (285 aa).

The protein belongs to the R-transferase family. Bpt subfamily.

Its subcellular location is the cytoplasm. The catalysed reaction is N-terminal L-glutamyl-[protein] + L-leucyl-tRNA(Leu) = N-terminal L-leucyl-L-glutamyl-[protein] + tRNA(Leu) + H(+). It carries out the reaction N-terminal L-aspartyl-[protein] + L-leucyl-tRNA(Leu) = N-terminal L-leucyl-L-aspartyl-[protein] + tRNA(Leu) + H(+). Functionally, functions in the N-end rule pathway of protein degradation where it conjugates Leu from its aminoacyl-tRNA to the N-termini of proteins containing an N-terminal aspartate or glutamate. In Dinoroseobacter shibae (strain DSM 16493 / NCIMB 14021 / DFL 12), this protein is Aspartate/glutamate leucyltransferase.